The sequence spans 219 residues: MKKTDWSQPLRNRLAEGYFPKMIEFINQTYQEGKIYPPENQIFRAIELTPLAQTKVIIVGQDPYPQPGKAQGLAFSYPATFKVNRPDSIVNIQKELREEGFSKEDSDLTAWAEQGVLLLNAVLTVPEFASNAHAGKIWEPLTDEIIKIASDDERPKVFILWGGFARKKAKLIDGSKHLILEAAHPSPLSASRGFFGSHPFSKTNDFLVQTGQSPIDWSK.

The Proton acceptor role is filled by Asp-62.

The protein belongs to the uracil-DNA glycosylase (UDG) superfamily. UNG family.

It is found in the cytoplasm. It catalyses the reaction Hydrolyzes single-stranded DNA or mismatched double-stranded DNA and polynucleotides, releasing free uracil.. Functionally, excises uracil residues from the DNA which can arise as a result of misincorporation of dUMP residues by DNA polymerase or due to deamination of cytosine. The sequence is that of Uracil-DNA glycosylase from Lactococcus lactis subsp. cremoris (strain MG1363).